The following is a 122-amino-acid chain: Prefoldin subunit 1 (122 aa).

It belongs to the prefoldin subunit beta family. As to quaternary structure, heterohexamer of two PFD-alpha type and four PFD-beta type subunits.

In terms of biological role, binds specifically to cytosolic chaperonin (c-CPN) and transfers target proteins to it. Binds to nascent polypeptide chain and promotes folding in an environment in which there are many competing pathways for nonnative proteins. The protein is Prefoldin subunit 1 (pfdn1) of Tetraodon nigroviridis (Spotted green pufferfish).